A 294-amino-acid polypeptide reads, in one-letter code: Ankyrin repeat and SOCS box protein 9 (294 aa).

Methionine 1 carries the N-acetylmethionine modification. 6 ANK repeats span residues 35–64, 68–97, 101–130, 133–162, 166–195, and 198–227; these read SDWSPMHEAAIHGHQLSLRNLISQGWAVNI, DHVSPLHEACLGGHLSCVKILLKHGAQVNG, DWHTPLFNACVSGSWDCVNLLLQHGASVQP, DLASPIHEAARRGHVECVNSLIAYGGNIDH, HLGTPLYLACENQQRACVKKLLESGADVNQ, and GQDSPLHAVARTASEELACLLMDFGADTQA. A Phosphoserine modification is found at serine 51. An SOCS box domain is found at 240–294; the sequence is PPESPLAQLFLEREGPPSLMQLCRLRIRKCFGIQQHHKITKLVLPEDLKQFLLHL.

The protein belongs to the ankyrin SOCS box (ASB) family. As to quaternary structure, substrate-recognition component of the ECS(ASB9) complex, composed of ASB9, CUL5, ELOB, ELOC and RNF7/RBX2. As to expression, predominantly expressed in testis, kidney, and liver.

It is found in the mitochondrion. It participates in protein modification; protein ubiquitination. Substrate-recognition component of a cullin-5-RING E3 ubiquitin-protein ligase complex (ECS complex, also named CRL5 complex), which mediates the ubiquitination and subsequent proteasomal degradation of target proteins. The ECS(ASB9) complex catalyzes ubiquitination of creatine kinases CKB and CKMT1A. In terms of biological role, does not interact with the Elongin BC complex, likely to be a negative regulator of isoform 1. In Homo sapiens (Human), this protein is Ankyrin repeat and SOCS box protein 9.